Consider the following 367-residue polypeptide: Phospho-N-acetylmuramoyl-pentapeptide-transferase (367 aa).

The next 10 helical transmembrane spans lie at 28–48, 75–95, 96–116, 134–154, 175–195, 206–226, 243–263, 271–291, 295–315, and 344–364; these read GALM…IGWL, TMGG…WADL, TNAY…IGFI, FKLV…THTA, LMIN…VGSG, GLAI…AYVV, AGEI…FLWW, FMGD…AVAI, LVLA…MVQV, and TIVI…LATL.

Belongs to the glycosyltransferase 4 family. MraY subfamily. Mg(2+) serves as cofactor.

The protein resides in the cell inner membrane. It catalyses the reaction UDP-N-acetyl-alpha-D-muramoyl-L-alanyl-gamma-D-glutamyl-meso-2,6-diaminopimeloyl-D-alanyl-D-alanine + di-trans,octa-cis-undecaprenyl phosphate = di-trans,octa-cis-undecaprenyl diphospho-N-acetyl-alpha-D-muramoyl-L-alanyl-D-glutamyl-meso-2,6-diaminopimeloyl-D-alanyl-D-alanine + UMP. The protein operates within cell wall biogenesis; peptidoglycan biosynthesis. Catalyzes the initial step of the lipid cycle reactions in the biosynthesis of the cell wall peptidoglycan: transfers peptidoglycan precursor phospho-MurNAc-pentapeptide from UDP-MurNAc-pentapeptide onto the lipid carrier undecaprenyl phosphate, yielding undecaprenyl-pyrophosphoryl-MurNAc-pentapeptide, known as lipid I. The protein is Phospho-N-acetylmuramoyl-pentapeptide-transferase of Maricaulis maris (strain MCS10) (Caulobacter maris).